A 188-amino-acid polypeptide reads, in one-letter code: Elongation factor P (188 aa).

The residue at position 34 (Lys34) is an N6-(3,6-diaminohexanoyl)-5-hydroxylysine.

This sequence belongs to the elongation factor P family. In terms of processing, is beta-lysylated on the epsilon-amino group of Lys-34 by the combined action of EpmA and EpmB, and then hydroxylated on the C5 position of the same residue by EpmC. Lysylation is critical for the stimulatory effect of EF-P on peptide-bond formation. The lysylation moiety would extend toward the peptidyltransferase center and stabilize the terminal 3-CCA end of the tRNA. The hydroxylation of the C5 position on Lys-34 would allow additional potential stabilizing hydrogen-bond interactions with the P-tRNA.

It is found in the cytoplasm. It functions in the pathway protein biosynthesis; polypeptide chain elongation. Involved in peptide bond synthesis. Alleviates ribosome stalling that occurs when 3 or more consecutive Pro residues or the sequence PPG is present in a protein, possibly by augmenting the peptidyl transferase activity of the ribosome. Modification of Lys-34 is required for alleviation. The protein is Elongation factor P of Salmonella arizonae (strain ATCC BAA-731 / CDC346-86 / RSK2980).